Consider the following 435-residue polypeptide: Centrosomal protein of 55 kDa (435 aa).

3 disordered regions span residues methionine 1–alanine 63, histidine 213–arginine 239, and glutamate 268–glutamine 287. Coiled-coil stretches lie at residues serine 18–tyrosine 140 and glutamate 185–arginine 373. 2 stretches are compositionally biased toward basic and acidic residues: residues alanine 26–arginine 49 and histidine 213–serine 222.

It localises to the cytoplasm. The protein resides in the cytoskeleton. It is found in the microtubule organizing center. The protein localises to the centrosome. Its subcellular location is the centriole. It localises to the cleavage furrow. The protein resides in the midbody. It is found in the midbody ring. Its function is as follows. Plays a role in mitotic exit and cytokinesis. Recruits PDCD6IP and TSG101 to midbody during cytokinesis. Required for successful completion of cytokinesis. Not required for microtubule nucleation. Plays a role in the development of the brain and kidney. This is Centrosomal protein of 55 kDa from Danio rerio (Zebrafish).